Reading from the N-terminus, the 762-residue chain is 5-methyltetrahydropteroyltriglutamate--homocysteine methyltransferase (762 aa).

5-methyltetrahydropteroyltri-L-glutamate contacts are provided by residues 17–20 and lysine 111; that span reads REWK. Residues 435 to 437 and glutamate 488 each bind L-homocysteine; that span reads IGS. Residues 435–437 and glutamate 488 contribute to the L-methionine site; that span reads IGS. 5-methyltetrahydropteroyltri-L-glutamate-binding positions include 519–520 and tryptophan 565; that span reads RC. Aspartate 603 contacts L-homocysteine. Aspartate 603 contacts L-methionine. Glutamate 609 is a 5-methyltetrahydropteroyltri-L-glutamate binding site. Residues histidine 645, cysteine 647, and glutamate 669 each coordinate Zn(2+). Catalysis depends on histidine 698, which acts as the Proton donor. Cysteine 730 contributes to the Zn(2+) binding site.

Belongs to the vitamin-B12 independent methionine synthase family. The cofactor is Zn(2+).

It catalyses the reaction 5-methyltetrahydropteroyltri-L-glutamate + L-homocysteine = tetrahydropteroyltri-L-glutamate + L-methionine. Its pathway is amino-acid biosynthesis; L-methionine biosynthesis via de novo pathway; L-methionine from L-homocysteine (MetE route): step 1/1. Its function is as follows. Catalyzes the transfer of a methyl group from 5-methyltetrahydrofolate to homocysteine resulting in methionine formation. The polypeptide is 5-methyltetrahydropteroyltriglutamate--homocysteine methyltransferase (Bacillus anthracis (strain CDC 684 / NRRL 3495)).